The following is a 947-amino-acid chain: MGKKIRVYELAQKMGVDNKVLLEKLHEAGIDAKSHMSVLSEEDVEKLDEAPAKVERVEERRITAGVIRRRRKEVPQEEKAAPPAAAEEPSSVDTAVAEEAPAEEVQPVSDQPEIAVEPPPAGKQEEVAAPAPEPKAEEPVVEEVIAEPAVEEVVEEPSAVEQEEHVETTPVAEEEPKVEEQPSVEAESKAVSGELEESKTADQSKGQSEAAEVSVTKEKPKVEKATANRAKILGRVELSTLTSPPKRQERAKNGKGRPERPKGAKPSGGPAPRAKEAAPQAAVPFDGGPAPDKEVRGGKKGKKGKGNSYDKDKGFADGGKGRRARRQVYEPERDERRMRRGKKTPKPQKKTEVTVSKAIKRIIRISDVITVGELAKRMGVKSKDLITELMRQGQMVTINHPLDFETAAILASEFNYEVENVAFDEENLLADTAAVTEEGDSEEGCVPRPPVVTIMGHVDHGKTSLLDAIRATNVTGGEAGGITQHIGAYDVSVDDKKITFLDTPGHEAFTSMRARGAKVTDIVILVVAADDGVMPQTKEAINHSKAAGVPIIVAVNKMDKPDANSDRVKQELTEFEMIPEEWGGDTIFVEVSAKNRTNLDSLLEMVLLQAEVLELKANPNKRAKGAIVEARLDRGRGPVATVLVEEGTLRIGDPIVSGLHYGKVRTMTNDRGERLEEAGPACPVEVTGLSGTPTAGDSFHAVESEKDAKEVATHRQRKVREQELASTSKISLEQLYARMQEGEVQELKVIIKADVQGSVEAVRDSLVKLSTDACRLVVIHTAVGGINESDVSLASASDAIILGFNVRAESKAAALAETEGVDIRFYNVIYDAVNDIRDAMEGLLAPTLREKHLGKVEVRETFHVSKVGTIAGCYVTEGKVLRNAQVRLIRDHVVIWEGKLASLKRFKDDAREVQNGYECGLSLENYNDIKVGDIIEVFEMEEVKTSL.

Residues 69-353 (RRRKEVPQEE…TPKPQKKTEV (285 aa)) are disordered. Residues 81–108 (APPAAAEEPSSVDTAVAEEAPAEEVQPV) are compositionally biased toward low complexity. The segment covering 139–155 (PVVEEVIAEPAVEEVVE) has biased composition (acidic residues). Composition is skewed to basic and acidic residues over residues 215 to 226 (VTKEKPKVEKAT) and 246 to 262 (KRQE…ERPK). Residues 264–284 (AKPSGGPAPRAKEAAPQAAVP) are compositionally biased toward low complexity. Residues 327-337 (QVYEPERDERR) are compositionally biased toward basic and acidic residues. Residues 338–348 (MRRGKKTPKPQ) are compositionally biased toward basic residues. Residues 447–616 (PRPPVVTIMG…LLQAEVLELK (170 aa)) enclose the tr-type G domain. Residues 456–463 (GHVDHGKT) are G1. Residue 456–463 (GHVDHGKT) participates in GTP binding. The tract at residues 481-485 (GITQH) is G2. Residues 502–505 (DTPG) form a G3 region. Residues 502–506 (DTPGH) and 556–559 (NKMD) contribute to the GTP site. Residues 556–559 (NKMD) are G4. The segment at 592-594 (SAK) is G5.

Belongs to the TRAFAC class translation factor GTPase superfamily. Classic translation factor GTPase family. IF-2 subfamily.

It localises to the cytoplasm. One of the essential components for the initiation of protein synthesis. Protects formylmethionyl-tRNA from spontaneous hydrolysis and promotes its binding to the 30S ribosomal subunits. Also involved in the hydrolysis of GTP during the formation of the 70S ribosomal complex. The sequence is that of Translation initiation factor IF-2 from Syntrophotalea carbinolica (strain DSM 2380 / NBRC 103641 / GraBd1) (Pelobacter carbinolicus).